A 348-amino-acid polypeptide reads, in one-letter code: Probable WRKY transcription factor 27 (348 aa).

Disordered stretches follow at residues 19 to 52, 67 to 90, 133 to 153, and 218 to 320; these read VSTT…ASSS, TTTT…SPSP, LLQQ…QQKR, and GEHT…LIPN. Residues 75–85 show a composition bias toward pro residues; it reads SPPPLLPPPKA. Low complexity predominate over residues 133–142; that stretch reads LLQQQSQPPL. The segment covering 143 to 153 has biased composition (basic residues); the sequence is RSRKRKNQQKR. Residues 159–225 constitute a DNA-binding region (WRKY); that stretch reads TQENLSSDLW…YTGEHTHPRP (67 aa). The segment covering 228-242 has biased composition (polar residues); that stretch reads RNSLAGSTRNKSQPV. Residues 274–315 are compositionally biased toward acidic residues; that stretch reads DVQETNGDEDMVGQEVNMEEEEEEEEVEEDDEEEEDDDDVDD.

Belongs to the WRKY group II-e family.

Its subcellular location is the nucleus. In terms of biological role, transcription factor. Interacts specifically with the W box (5'-(T)TGAC[CT]-3'), a frequently occurring elicitor-responsive cis-acting element. This chain is Probable WRKY transcription factor 27 (WRKY27), found in Arabidopsis thaliana (Mouse-ear cress).